A 295-amino-acid polypeptide reads, in one-letter code: Zinc finger C2H2 protein ECU08_0560 (295 aa).

C2H2-type zinc fingers lie at residues 219-243 (FVCTYNDCKRAFKRYEHLKRHNLMH) and 249-273 (HKCRFPGCSKAFSRSDNLSQHYKVH).

The chain is Zinc finger C2H2 protein ECU08_0560 from Encephalitozoon cuniculi (strain GB-M1) (Microsporidian parasite).